A 96-amino-acid chain; its full sequence is Aspartyl/glutamyl-tRNA(Asn/Gln) amidotransferase subunit C (96 aa).

Belongs to the GatC family. As to quaternary structure, heterotrimer of A, B and C subunits.

The catalysed reaction is L-glutamyl-tRNA(Gln) + L-glutamine + ATP + H2O = L-glutaminyl-tRNA(Gln) + L-glutamate + ADP + phosphate + H(+). It carries out the reaction L-aspartyl-tRNA(Asn) + L-glutamine + ATP + H2O = L-asparaginyl-tRNA(Asn) + L-glutamate + ADP + phosphate + 2 H(+). Functionally, allows the formation of correctly charged Asn-tRNA(Asn) or Gln-tRNA(Gln) through the transamidation of misacylated Asp-tRNA(Asn) or Glu-tRNA(Gln) in organisms which lack either or both of asparaginyl-tRNA or glutaminyl-tRNA synthetases. The reaction takes place in the presence of glutamine and ATP through an activated phospho-Asp-tRNA(Asn) or phospho-Glu-tRNA(Gln). The sequence is that of Aspartyl/glutamyl-tRNA(Asn/Gln) amidotransferase subunit C from Aliarcobacter butzleri (strain RM4018) (Arcobacter butzleri).